Here is a 144-residue protein sequence, read N- to C-terminus: Aspartate carbamoyltransferase regulatory chain (144 aa).

The Zn(2+) site is built by cysteine 103, cysteine 108, cysteine 132, and cysteine 135.

This sequence belongs to the PyrI family. In terms of assembly, contains catalytic and regulatory chains. Zn(2+) serves as cofactor.

In terms of biological role, involved in allosteric regulation of aspartate carbamoyltransferase. The chain is Aspartate carbamoyltransferase regulatory chain from Clostridium tetani (strain Massachusetts / E88).